Reading from the N-terminus, the 426-residue chain is 3-phosphoshikimate 1-carboxyvinyltransferase (426 aa).

The 3-phosphoshikimate site is built by lysine 22, serine 23, and arginine 27. Phosphoenolpyruvate is bound at residue lysine 22. The phosphoenolpyruvate site is built by glycine 96 and arginine 124. 3-phosphoshikimate is bound by residues serine 170, serine 171, glutamine 172, serine 198, aspartate 314, asparagine 337, and lysine 341. Glutamine 172 serves as a coordination point for phosphoenolpyruvate. Aspartate 314 functions as the Proton acceptor in the catalytic mechanism. Phosphoenolpyruvate is bound by residues arginine 345, arginine 387, and lysine 412.

This sequence belongs to the EPSP synthase family. In terms of assembly, monomer.

It is found in the cytoplasm. The enzyme catalyses 3-phosphoshikimate + phosphoenolpyruvate = 5-O-(1-carboxyvinyl)-3-phosphoshikimate + phosphate. It participates in metabolic intermediate biosynthesis; chorismate biosynthesis; chorismate from D-erythrose 4-phosphate and phosphoenolpyruvate: step 6/7. Functionally, catalyzes the transfer of the enolpyruvyl moiety of phosphoenolpyruvate (PEP) to the 5-hydroxyl of shikimate-3-phosphate (S3P) to produce enolpyruvyl shikimate-3-phosphate and inorganic phosphate. This Shewanella piezotolerans (strain WP3 / JCM 13877) protein is 3-phosphoshikimate 1-carboxyvinyltransferase.